The following is a 317-amino-acid chain: D-alanine--D-alanine ligase (317 aa).

One can recognise an ATP-grasp domain in the interval 111-308 (KRFWNGIGIP…YASLVEKIAQ (198 aa)). Residue 137–192 (EEQMSYPVIVKPSREGSTIGINKAMNRAELDDALIKALEYDSDILVEEFIDGPEFT) participates in ATP binding. Mg(2+)-binding residues include D262, E275, and N277.

Belongs to the D-alanine--D-alanine ligase family. Mg(2+) is required as a cofactor. Requires Mn(2+) as cofactor.

The protein localises to the cytoplasm. It catalyses the reaction 2 D-alanine + ATP = D-alanyl-D-alanine + ADP + phosphate + H(+). The protein operates within cell wall biogenesis; peptidoglycan biosynthesis. Functionally, cell wall formation. The polypeptide is D-alanine--D-alanine ligase (Marinomonas sp. (strain MWYL1)).